A 550-amino-acid chain; its full sequence is Membrane protein insertase YidC (550 aa).

The helical transmembrane segment at 6–26 (LIVFIVLSFGLLFVWQEYFAP) threads the bilayer. Residues 30–59 (PKPVAAAVQPDGTPAPATARPADSPATGKL) form a disordered region. Helical transmembrane passes span 360 to 380 (WGWA…PLSA), 430 to 450 (LPIV…LASV), 472 to 492 (ILPA…PPPA), and 504 to 524 (PLAF…YWLV).

It belongs to the OXA1/ALB3/YidC family. Type 1 subfamily. As to quaternary structure, interacts with the Sec translocase complex via SecD. Specifically interacts with transmembrane segments of nascent integral membrane proteins during membrane integration.

It localises to the cell inner membrane. Its function is as follows. Required for the insertion and/or proper folding and/or complex formation of integral membrane proteins into the membrane. Involved in integration of membrane proteins that insert both dependently and independently of the Sec translocase complex, as well as at least some lipoproteins. Aids folding of multispanning membrane proteins. In Laribacter hongkongensis (strain HLHK9), this protein is Membrane protein insertase YidC.